The primary structure comprises 339 residues: Glycerol-3-phosphate dehydrogenase [NAD(P)+] (339 aa).

Serine 15, tyrosine 16, histidine 36, and lysine 110 together coordinate NADPH. 3 residues coordinate sn-glycerol 3-phosphate: lysine 110, glycine 139, and threonine 141. Position 143 (alanine 143) interacts with NADPH. 5 residues coordinate sn-glycerol 3-phosphate: lysine 195, aspartate 248, serine 258, arginine 259, and asparagine 260. The Proton acceptor role is filled by lysine 195. Arginine 259 contributes to the NADPH binding site. Positions 283 and 285 each coordinate NADPH.

Belongs to the NAD-dependent glycerol-3-phosphate dehydrogenase family.

It localises to the cytoplasm. It catalyses the reaction sn-glycerol 3-phosphate + NAD(+) = dihydroxyacetone phosphate + NADH + H(+). The enzyme catalyses sn-glycerol 3-phosphate + NADP(+) = dihydroxyacetone phosphate + NADPH + H(+). The protein operates within membrane lipid metabolism; glycerophospholipid metabolism. Its function is as follows. Catalyzes the reduction of the glycolytic intermediate dihydroxyacetone phosphate (DHAP) to sn-glycerol 3-phosphate (G3P), the key precursor for phospholipid synthesis. The chain is Glycerol-3-phosphate dehydrogenase [NAD(P)+] from Citrobacter koseri (strain ATCC BAA-895 / CDC 4225-83 / SGSC4696).